A 557-amino-acid chain; its full sequence is NADP-dependent malic enzyme (557 aa).

Y91 (proton donor) is an active-site residue. R144 serves as a coordination point for NADP(+). Substrate-binding residues include R144 and K162. The active-site Proton acceptor is K162. Residues E234 and D235 each coordinate Mn(2+). N238 is an NADP(+) binding site. D258 contacts Mn(2+). NADP(+) contacts are provided by residues 291 to 294 (AGEA), S325, N397, and N443. N443 contacts substrate.

It belongs to the malic enzymes family. Homotetramer. Mg(2+) is required as a cofactor. It depends on Mn(2+) as a cofactor. The N-terminus is blocked.

The protein localises to the cytoplasm. The enzyme catalyses (S)-malate + NADP(+) = pyruvate + CO2 + NADPH. The catalysed reaction is oxaloacetate + H(+) = pyruvate + CO2. This chain is NADP-dependent malic enzyme (ME1), found in Columba livia (Rock dove).